Here is a 366-residue protein sequence, read N- to C-terminus: Rab9 effector protein with kelch motifs (366 aa).

6 Kelch repeats span residues 49–95 (KILI…FISA), 100–146 (NIWV…TSSA), 151–200 (KLYV…VLTA), 204–253 (KLFV…AWKS), 254–303 (YIYI…LLPW), and 343–366 (LCFI…TILQ).

Functionally, rab9 effector required for endosome to trans-Golgi network (TGN) transport. This Xenopus laevis (African clawed frog) protein is Rab9 effector protein with kelch motifs (rabepk).